We begin with the raw amino-acid sequence, 1150 residues long: Cell division cycle and apoptosis regulator protein 1 (1150 aa).

The interval 1 to 249 (MAQFGGQKNP…TQPQPQSLLQ (249 aa)) is interaction with AR. Disordered stretches follow at residues 124 to 146 (PTAQ…QPQK) and 285 to 354 (IVSQ…SPRR). The segment covering 134–146 (TPRSSQQQTQPQK) has biased composition (low complexity). Residues 203–660 (QRIQTLPNQN…RALSSKGLKS (458 aa)) are interaction with GATA2. Basic and acidic residues-rich tracts occupy residues 293-334 (RRLD…ERSP) and 341-352 (ERSPRRERERSP). Ser-456 is subject to Phosphoserine. A coiled-coil region spans residues 594 to 618 (KQQLVEKLQGERKEADGEQDEEEKD). Residues 600 to 638 (KLQGERKEADGEQDEEEKDDGEAKEISTPTHWSKLDPKT) are disordered. The span at 610–621 (GEQDEEEKDDGE) shows a compositional bias: acidic residues. Thr-627 carries the phosphothreonine modification. The 35-residue stretch at 636–670 (PKTMKVNDLRKELESRALSSKGLKSQLIARLTKQL) folds into the SAP domain. Lys-637 participates in a covalent cross-link: Glycyl lysine isopeptide (Lys-Gly) (interchain with G-Cter in ubiquitin). Residues 643 to 1150 (DLRKELESRA…QKSKENGASV (508 aa)) are interaction with GATA1. At Thr-667 the chain carries Phosphothreonine. Composition is skewed to basic and acidic residues over residues 673-687 (EEQK…KSEK), 694-713 (DRKS…EEIE), 796-817 (KEDK…KKEE), and 832-855 (SGDD…KDDS). Disordered regions lie at residues 673-713 (EEQK…EEIE) and 796-915 (KEDK…EKEK). Phosphoserine is present on residues Ser-685 and Ser-697. The segment covering 856 to 889 (KDDDETEEDNNQDEYDPMEAEEAEDEEDDRDEEE) has biased composition (acidic residues). Thr-861 bears the Phosphothreonine mark. Basic and acidic residues predominate over residues 890–915 (MTKRDDKRDINRYCKERPSKDKEKEK). Residue Lys-1012 forms a Glycyl lysine isopeptide (Lys-Gly) (interchain with G-Cter in SUMO1); alternate linkage. Lys-1012 is covalently cross-linked (Glycyl lysine isopeptide (Lys-Gly) (interchain with G-Cter in SUMO2); alternate). Positions 1033–1114 (DVGSLLQKLE…LQFENQMNKT (82 aa)) form a coiled coil. Residues Lys-1067 and Lys-1135 each participate in a glycyl lysine isopeptide (Lys-Gly) (interchain with G-Cter in SUMO2) cross-link.

In terms of assembly, directly interacts with ESR1, NR3C1 and p53/TP53. Interacts (via N-terminus) with CALCOCO1. Interacts with MED1. Interacts with GATA1. Interacts with AR and GATA2. In terms of tissue distribution, expressed in various epithelial cancer cell lines, including breast, colon, prostate, pancreatic and leukemia. Expression is regulated by growth factors.

It localises to the cytoplasm. The protein localises to the perinuclear region. Associates with components of the Mediator and p160 coactivator complexes that play a role as intermediaries transducing regulatory signals from upstream transcriptional activator proteins to basal transcription machinery at the core promoter. Recruited to endogenous nuclear receptor target genes in response to the appropriate hormone. Also functions as a p53 coactivator. May thus play an important role in transcriptional regulation. May be involved in apoptosis signaling in the presence of the reinoid CD437. Apoptosis induction involves sequestration of 14-3-3 protein(s) and mediated altered expression of multiple cell cycle regulatory genes including MYC, CCNB1 and CDKN1A. Plays a role in cell cycle progression and/or cell proliferation. In association with CALCOCO1 enhances GATA1- and MED1-mediated transcriptional activation from the gamma-globin promoter during erythroid differentiation of K562 erythroleukemia cells. Can act as a both a coactivator and corepressor of AR-mediated transcription. Contributes to chromatin looping and AR transcription complex assembly by stabilizing AR-GATA2 association on chromatin and facilitating MED1 and RNA polymerase II recruitment to AR-binding sites. May play an important role in the growth and tumorigenesis of prostate cancer cells. This is Cell division cycle and apoptosis regulator protein 1 (CCAR1) from Homo sapiens (Human).